Consider the following 403-residue polypeptide: Keratin, type I cytoskeletal 19 (403 aa).

A head region spans residues 1-82; it reads MTSYSYRQTS…AVSDGLLSGN (82 aa). Arg7 carries the post-translational modification Omega-N-methylarginine. A phosphoserine mark is found at Ser14 and Ser22. The residue at position 24 (Arg24) is an Asymmetric dimethylarginine; alternate. Arg24 is subject to Omega-N-methylarginine; alternate. Ser27 is subject to Phosphoserine. Arg32 carries the omega-N-methylarginine modification. Ser35 and Ser40 each carry phosphoserine. Omega-N-methylarginine occurs at positions 43 and 51. A Phosphoserine modification is found at Ser57. Position 64 is an omega-N-methylarginine (Arg64). 2 positions are modified to phosphoserine: Ser67 and Ser75. Residues 83–118 form a coil 1A region; sequence EKITMQNLNDRLASYLDKVRALEQANGELEVKIRDW. Positions 83–394 constitute an IF rod domain; the sequence is EKITMQNLND…SLLEGQEAHY (312 aa). A linker 1 region spans residues 119–136; that stretch reads YQKQGPGPSRDYNHYFKT. The interval 137–228 is coil 1B; sequence IEDLRDKILG…KNHEEEITAL (92 aa). The segment at 229-251 is linker 12; the sequence is RSQVGGQVSVEVDSTPGVDLAKI. Residues 247-393 form a necessary for interaction with PNN region; that stretch reads DLAKILSEMR…RSLLEGQEAH (147 aa). The coil 2 stretch occupies residues 252-390; the sequence is LSEMRSQYEI…ATYRSLLEGQ (139 aa). Thr326 bears the Phosphothreonine mark. Residues 391–403 form a rod-like helical tail region; it reads EAHYNNLPTPKAI. Phosphotyrosine is present on Tyr394.

The protein belongs to the intermediate filament family. As to quaternary structure, heterotetramer of two type I and two type II keratins. Interacts with PNN and the actin-binding domain of DMD.

Its function is as follows. Involved in the organization of myofibers. Together with KRT8, helps to link the contractile apparatus to dystrophin at the costameres of striated muscle. The protein is Keratin, type I cytoskeletal 19 (Krt19) of Mus musculus (Mouse).